The sequence spans 278 residues: Release factor glutamine methyltransferase (278 aa).

Residues 117-121 (GTGSG), Asp-140, and Asn-184 each bind S-adenosyl-L-methionine. 184–187 (NPPY) is a binding site for substrate.

This sequence belongs to the protein N5-glutamine methyltransferase family. PrmC subfamily.

The catalysed reaction is L-glutaminyl-[peptide chain release factor] + S-adenosyl-L-methionine = N(5)-methyl-L-glutaminyl-[peptide chain release factor] + S-adenosyl-L-homocysteine + H(+). Its function is as follows. Methylates the class 1 translation termination release factors RF1/PrfA and RF2/PrfB on the glutamine residue of the universally conserved GGQ motif. The protein is Release factor glutamine methyltransferase of Staphylococcus aureus (strain NCTC 8325 / PS 47).